An 809-amino-acid polypeptide reads, in one-letter code: MTMIFFSKLNRSISRSKGFLYGGGVRSAARLLTSPGLEAASVNEVEGGLGFIRRHFASLASRKGLVNNDLIGVFANPRLRRFFSDEAPKKKNYENYFPKDKQEPKSDQKSEHKEGSEKNENENVGDMFMNRFQNLLIPLLALAVFFSTFSFGSGEQQQISFQEFKNKLLEPGLVDHIDVSNKSVAKVYVRSTPKDQQTTDVVHGNGNGIPAKRTGGQYKYYFNIGSVDSFEEKLEEAQEALGVDRHEYVPVTYVSEMVWYQEFMRFAPTLLLLGTLIYGARRMQGGLGVGGTGGKNGRGIFNIGKATITRADKHSKNKIYFKDVAGCDEAKQEIMEFVHFLKNPKKYEDLGAKIPKGALLVGPPGTGKTLLAKATAGESGVPFLSISGSDFMEMFVGVGPSRVRHLFQEARQAAPSIIFIDEIDAIGRARGRGGLGGNDERESTLNQLLVEMDGFGTTAGVVVLAGTNRPDILDKALLRPGRFDRQITIDKPDIKGRDQIFKIYLKKIKLDHEPSYYSQRLAALTPGFAGADIANVCNEAALIAARHEGATVTMAHFESAIDRVIGGLEKKNRVISKLERRTVAYHESGHAVVGWFLEHAEPLLKVTIVPRGTAALGFAQYVPNENLLMTKEQLFDMTCMTLGGRAAEQVLIGKISTGAQNDLEKVTKMTYAQVAVYGFSDKVGLLSFPPRDDGYDFSKPYSNKTGAIIDEEVRDWVAKAYERTVELVEEHKVKVAEIAELLLEKEVLHQDDLLKILGERPFKSAEVTNYDRFKSGFEETEKDSAATPTVEPVVDDGAPPPFEPQVVPT.

A mitochondrion-targeting transit peptide spans 1-83 (MTMIFFSKLN…FANPRLRRFF (83 aa)). A compositionally biased stretch (basic and acidic residues) spans 93-121 (YENYFPKDKQEPKSDQKSEHKEGSEKNEN). The tract at residues 93-122 (YENYFPKDKQEPKSDQKSEHKEGSEKNENE) is disordered. The helical transmembrane segment at 132–152 (FQNLLIPLLALAVFFSTFSFG) threads the bilayer. 362 to 369 (GPPGTGKT) is an ATP binding site. His586 serves as a coordination point for Zn(2+). The active site involves Glu587. 2 residues coordinate Zn(2+): His590 and Asp662. The disordered stretch occupies residues 776–809 (GFEETEKDSAATPTVEPVVDDGAPPPFEPQVVPT).

The protein in the N-terminal section; belongs to the AAA ATPase family. It in the C-terminal section; belongs to the peptidase M41 family. The cofactor is Zn(2+).

The protein localises to the mitochondrion inner membrane. In terms of biological role, probable ATP-dependent zinc metallopeptidase. Involved in the assembly and/or stability of the complexes I and V of the mitochondrial oxidative phosphorylation system. The protein is ATP-dependent zinc metalloprotease FTSH 3, mitochondrial (FTSH3) of Arabidopsis thaliana (Mouse-ear cress).